The sequence spans 204 residues: MGSRDHLFKVLVVGDAAVGKTSLVQRYSQDSFSKHYKSTVGVDFALKVLQWSDSEMVRLQLWDIAGQERFTSMTRLYYRDASACVIMFDVTNATTFSNSQRWKQDLDSKLTLPSGEPVPCLLLANKSDLSPWAVSRDQIDRFSKENGFTGWTETSVKENKNINEAMRVLVEKMMNNSREDVMSLSTQGNYINLQAKPSSGWTCC.

Residues S33, K34, H35, Y36, K37, and T39 each coordinate GTP. The Effector region motif lies at 36–44 (YKSTVGVDF). T71 carries the post-translational modification Phosphothreonine; by LRRK2. Phosphoserine is present on S72. Residues K126, V156, and K157 each contribute to the GTP site. S-geranylgeranyl cysteine attachment occurs at residues C203 and C204.

Belongs to the small GTPase superfamily. Rab family. As to quaternary structure, interacts with LRRK2 (via the N-terminus); this interaction is direct and stimulates kinase activity.

Its subcellular location is the cell membrane. It localises to the cytoplasm. The protein resides in the perinuclear region. The protein localises to the golgi apparatus. It is found in the golgi apparatus membrane. Its subcellular location is the trans-Golgi network. It localises to the cytoskeleton. Its function is as follows. The small GTPases Rab are key regulators in vesicle trafficking. Essential for maintaining the integrity of endosome-trans-Golgi network structure. Together with LRRK2, plays a role in the retrograde trafficking pathway for recycling proteins, such as mannose 6 phosphate receptor (M6PR), between lysosomes and the Golgi apparatus in a retromer-dependent manner. Recruits LRRK2 to the Golgi apparatus and stimulates LRRK2 kinase activity. Stimulates phosphorylation of RAB10 'Thr-73' by LRRK2. Also regulates neuronal process morphology in the intact central nervous system (CNS). The chain is Ras-related protein Rab-7L1 (Rab29) from Mus musculus (Mouse).